Here is a 397-residue protein sequence, read N- to C-terminus: Lysophospholipid transporter LplT (397 aa).

Over 1–17 (MSESVHTNTSLWSKGMK) the chain is Periplasmic. Residues 18-38 (AVIVAQFLSAFGDNALLFATL) form a helical membrane-spanning segment. Over 39–52 (ALLKAQFYPEWSQP) the chain is Cytoplasmic. A helical transmembrane segment spans residues 53-73 (ILQMVFVGAYILFAPFVGQVA). The Periplasmic portion of the chain corresponds to 74–90 (DSFAKGRVMMFANGLKL). The helical transmembrane segment at 91–111 (LGAASICFGINPFLGYTLVGV) threads the bilayer. The Cytoplasmic segment spans residues 112-144 (GAAAYSPAKYGILGELTTGSKLVKANGLMEAST). Residues 145–165 (IAAILLGSVAGGVLADWHVLV) traverse the membrane as a helical segment. A166 is a topological domain (periplasmic). The helical transmembrane segment at 167–187 (LAACALAYGGAVVANIYIPKL) threads the bilayer. The Cytoplasmic portion of the chain corresponds to 188-226 (AAARPGQSWNLINMTRSFLNACTSLWRNGETRFSLVGTS). A helical transmembrane segment spans residues 227 to 247 (LFWGAGVTLRFLLVLWVPVAL). The Periplasmic portion of the chain corresponds to 248–256 (GITDNATPT). The chain crosses the membrane as a helical span at residues 257–277 (YLNAMVAIGIVVGAGAAAKLV). The Cytoplasmic portion of the chain corresponds to 278 to 280 (TLE). The helical transmembrane segment at 281-301 (TVSRCMPAGILIGVVVLIFSL) threads the bilayer. The Periplasmic portion of the chain corresponds to 302 to 304 (QHE). A helical membrane pass occupies residues 305-325 (LLPAYALLMLIGVMGGFFVVP). The Cytoplasmic segment spans residues 326–343 (LNALLQERGKKSVGAGNA). A helical membrane pass occupies residues 344–364 (IAVQNLGENSAMLLMLGIYSL). Over 365–366 (AV) the chain is Periplasmic. Residues 367 to 387 (MVGIPVVPIGIGFGALFALAI) traverse the membrane as a helical segment. The Cytoplasmic segment spans residues 388–397 (TALWIWQRRH).

This sequence belongs to the major facilitator superfamily. LplT (TC 2.A.1.42) family.

It localises to the cell inner membrane. Functionally, catalyzes the facilitated diffusion of 2-acyl-glycero-3-phosphoethanolamine (2-acyl-GPE) into the cell. The protein is Lysophospholipid transporter LplT of Escherichia coli (strain ATCC 8739 / DSM 1576 / NBRC 3972 / NCIMB 8545 / WDCM 00012 / Crooks).